Here is an 802-residue protein sequence, read N- to C-terminus: Pyrophosphate-energized membrane proton pump 2 (802 aa).

6 helical membrane-spanning segments follow: residues 45 to 65 (VLSI…ASTS), 66 to 86 (PIIV…IYLT), 118 to 138 (YSTI…IYLF), 160 to 180 (VAAF…GMWV), 206 to 226 (AGGF…AILY), and 246 to 266 (LPLL…FAQL). Lys273 is a binding site for substrate. Residues Asp276, Asp280, and Asp306 each coordinate Mg(2+). The next 5 helical transmembrane spans lie at 348 to 368 (FILF…IGIL), 386 to 406 (MAVL…TFGA), 421 to 441 (WFNF…FVWI), 468 to 488 (IIAG…TISV), and 511 to 531 (GGLF…AYVL). Positions 541 and 568 each coordinate Mg(2+). 4 consecutive transmembrane segments (helical) span residues 577 to 597 (FAIG…MDEV), 615 to 635 (VFVG…WACA), 686 to 706 (GALA…LGYY), and 716 to 736 (VVAS…LFLN). The Mg(2+) site is built by Asp743 and Asp773. Residue Lys776 participates in substrate binding. A helical transmembrane segment spans residues 782 to 802 (SIHVLIKMLATITLVMAPVFL).

This sequence belongs to the H(+)-translocating pyrophosphatase (TC 3.A.10) family. K(+)-insensitive subfamily. As to quaternary structure, monomer. In terms of tissue distribution, ubiquitous. Mostly expressed in cotyledons, roots and flowers. Especially high levels in trichomes, sepals and stamen filaments.

Its subcellular location is the golgi apparatus membrane. The enzyme catalyses diphosphate + H2O + H(+)(in) = 2 phosphate + 2 H(+)(out). With respect to regulation, activated by Mg(+) but not by K(+). Inhibited by Ca(2+). Its function is as follows. Pyrophosphatase active in both inorganic pyrophosphate hydrolysis and H(+) translocation. The protein is Pyrophosphate-energized membrane proton pump 2 (AVPL1) of Arabidopsis thaliana (Mouse-ear cress).